Consider the following 316-residue polypeptide: Ribosomal RNA small subunit methyltransferase H (316 aa).

S-adenosyl-L-methionine is bound by residues 35–37 (AGH), D55, F84, D105, and Q112.

It belongs to the methyltransferase superfamily. RsmH family.

It localises to the cytoplasm. It catalyses the reaction cytidine(1402) in 16S rRNA + S-adenosyl-L-methionine = N(4)-methylcytidine(1402) in 16S rRNA + S-adenosyl-L-homocysteine + H(+). Specifically methylates the N4 position of cytidine in position 1402 (C1402) of 16S rRNA. This Streptococcus pneumoniae (strain Hungary19A-6) protein is Ribosomal RNA small subunit methyltransferase H.